The chain runs to 183 residues: ATP synthase subunit b, chloroplastic (183 aa).

Residues 25 to 45 (DILATNLINLTVVVGVLIFFG) form a helical membrane-spanning segment.

Belongs to the ATPase B chain family. F-type ATPases have 2 components, F(1) - the catalytic core - and F(0) - the membrane proton channel. F(1) has five subunits: alpha(3), beta(3), gamma(1), delta(1), epsilon(1). F(0) has four main subunits: a(1), b(1), b'(1) and c(10-14). The alpha and beta chains form an alternating ring which encloses part of the gamma chain. F(1) is attached to F(0) by a central stalk formed by the gamma and epsilon chains, while a peripheral stalk is formed by the delta, b and b' chains.

Its subcellular location is the plastid. The protein resides in the chloroplast thylakoid membrane. F(1)F(0) ATP synthase produces ATP from ADP in the presence of a proton or sodium gradient. F-type ATPases consist of two structural domains, F(1) containing the extramembraneous catalytic core and F(0) containing the membrane proton channel, linked together by a central stalk and a peripheral stalk. During catalysis, ATP synthesis in the catalytic domain of F(1) is coupled via a rotary mechanism of the central stalk subunits to proton translocation. Its function is as follows. Component of the F(0) channel, it forms part of the peripheral stalk, linking F(1) to F(0). This is ATP synthase subunit b, chloroplastic from Sorghum bicolor (Sorghum).